A 140-amino-acid polypeptide reads, in one-letter code: Putative pre-16S rRNA nuclease (140 aa).

It belongs to the YqgF nuclease family.

The protein resides in the cytoplasm. Functionally, could be a nuclease involved in processing of the 5'-end of pre-16S rRNA. The polypeptide is Putative pre-16S rRNA nuclease (Vibrio vulnificus (strain CMCP6)).